Reading from the N-terminus, the 261-residue chain is Cytochrome c oxidase subunit 3 (261 aa).

Topologically, residues 1 to 15 (MTHQTHAYHMVNPSP) are mitochondrial matrix. A helical transmembrane segment spans residues 16-33 (WPLTGAFSALLLTSGLVM). The Mitochondrial intermembrane segment spans residues 34–38 (WFHYN). The helical transmembrane segment at 39 to 62 (SITLLTLGLLTNILTMYQWWRDVI) threads the bilayer. The Mitochondrial matrix segment spans residues 63–77 (REGTYQGHHTPIVQK). A helical membrane pass occupies residues 78-99 (GLRYGMILFIVSEVFFFAGFFW). Over 100 to 129 (AFYHSSLVPTHDLGGCWPPTGISPLNPLEV) the chain is Mitochondrial intermembrane. A helical transmembrane segment spans residues 130–150 (PLLNTSVLLASGVSITWAHHS). Residues 151–156 (LMEGKR) lie on the Mitochondrial matrix side of the membrane. A helical membrane pass occupies residues 157–178 (NHMNQALLITIMLGLYFTILQA). The Mitochondrial intermembrane segment spans residues 179–198 (SEYFETSFSISDGIYGSTFF). A helical transmembrane segment spans residues 199-224 (MATGFHGLHVIIGSTFLIVCLLRQLK). At 225–232 (FHFTSKHH) the chain is on the mitochondrial matrix side. A helical membrane pass occupies residues 233–255 (FGFEAAAWYWHFVDVVWLFLYVS). Residues 256–261 (IYWWGS) lie on the Mitochondrial intermembrane side of the membrane.

This sequence belongs to the cytochrome c oxidase subunit 3 family. In terms of assembly, component of the cytochrome c oxidase (complex IV, CIV), a multisubunit enzyme composed of 14 subunits. The complex is composed of a catalytic core of 3 subunits MT-CO1, MT-CO2 and MT-CO3, encoded in the mitochondrial DNA, and 11 supernumerary subunits COX4I, COX5A, COX5B, COX6A, COX6B, COX6C, COX7A, COX7B, COX7C, COX8 and NDUFA4, which are encoded in the nuclear genome. The complex exists as a monomer or a dimer and forms supercomplexes (SCs) in the inner mitochondrial membrane with NADH-ubiquinone oxidoreductase (complex I, CI) and ubiquinol-cytochrome c oxidoreductase (cytochrome b-c1 complex, complex III, CIII), resulting in different assemblies (supercomplex SCI(1)III(2)IV(1) and megacomplex MCI(2)III(2)IV(2)).

It is found in the mitochondrion inner membrane. The catalysed reaction is 4 Fe(II)-[cytochrome c] + O2 + 8 H(+)(in) = 4 Fe(III)-[cytochrome c] + 2 H2O + 4 H(+)(out). Functionally, component of the cytochrome c oxidase, the last enzyme in the mitochondrial electron transport chain which drives oxidative phosphorylation. The respiratory chain contains 3 multisubunit complexes succinate dehydrogenase (complex II, CII), ubiquinol-cytochrome c oxidoreductase (cytochrome b-c1 complex, complex III, CIII) and cytochrome c oxidase (complex IV, CIV), that cooperate to transfer electrons derived from NADH and succinate to molecular oxygen, creating an electrochemical gradient over the inner membrane that drives transmembrane transport and the ATP synthase. Cytochrome c oxidase is the component of the respiratory chain that catalyzes the reduction of oxygen to water. Electrons originating from reduced cytochrome c in the intermembrane space (IMS) are transferred via the dinuclear copper A center (CU(A)) of subunit 2 and heme A of subunit 1 to the active site in subunit 1, a binuclear center (BNC) formed by heme A3 and copper B (CU(B)). The BNC reduces molecular oxygen to 2 water molecules using 4 electrons from cytochrome c in the IMS and 4 protons from the mitochondrial matrix. In Mus musculus (Mouse), this protein is Cytochrome c oxidase subunit 3 (mt-Co3).